The sequence spans 274 residues: Histone H1.1 (274 aa).

Disordered regions lie at residues 1-63 and 129-155; these read MSEV…SSHP and PSAS…PATV. Ser2 carries the N-acetylserine modification. A compositionally biased stretch (low complexity) spans 16-25; the sequence is TAADAPVTDA. A compositionally biased stretch (basic and acidic residues) spans 40–49; the sequence is NVKEVKEKKT. The H15 domain maps to 61 to 130; it reads SHPTYEEMIK…KVKASFKLPS (70 aa). The span at 129-145 shows a compositional bias: low complexity; the sequence is PSASAKASSPKAAAEKS. A Glycyl lysine isopeptide (Lys-Gly) (interchain with G-Cter in ubiquitin) cross-link involves residue Lys161. Disordered regions lie at residues 167-233 and 249-274; these read ASKA…PAKK and KTPV…RVKK. Composition is skewed to low complexity over residues 175–185 and 221–233; these read AVKPKTAAAKK and AAKT…PAKK.

This sequence belongs to the histone H1/H5 family.

The protein resides in the nucleus. It localises to the chromosome. Its function is as follows. Histones H1 are necessary for the condensation of nucleosome chains into higher-order structures. This is Histone H1.1 from Arabidopsis thaliana (Mouse-ear cress).